Reading from the N-terminus, the 262-residue chain is uncharacterized protein (262 aa).

Residues His7, His9, Glu96, His132, His156, and Asp211 each contribute to the a divalent metal cation site.

This sequence belongs to the metallo-dependent hydrolases superfamily. TatD-type hydrolase family. Requires a divalent metal cation as cofactor.

This is an uncharacterized protein from Mycoplasma genitalium (strain ATCC 33530 / DSM 19775 / NCTC 10195 / G37) (Mycoplasmoides genitalium).